Reading from the N-terminus, the 367-residue chain is Dihydroorotate dehydrogenase (quinone) (367 aa).

FMN is bound by residues 61-65 and T85; that span reads AGFDK. Residue K65 participates in substrate binding. 110–114 lines the substrate pocket; that stretch reads NRMGF. FMN is bound by residues N138 and N169. A substrate-binding site is contributed by N169. S172 serves as the catalytic Nucleophile. N174 contacts substrate. The FMN site is built by K212 and T240. 241 to 242 is a substrate binding site; sequence NT. Residues G263, G292, and 313 to 314 each bind FMN; that span reads YS.

It belongs to the dihydroorotate dehydrogenase family. Type 2 subfamily. As to quaternary structure, monomer. FMN is required as a cofactor.

It is found in the cell membrane. The enzyme catalyses (S)-dihydroorotate + a quinone = orotate + a quinol. Its pathway is pyrimidine metabolism; UMP biosynthesis via de novo pathway; orotate from (S)-dihydroorotate (quinone route): step 1/1. Functionally, catalyzes the conversion of dihydroorotate to orotate with quinone as electron acceptor. The polypeptide is Dihydroorotate dehydrogenase (quinone) (Rhodospirillum rubrum (strain ATCC 11170 / ATH 1.1.1 / DSM 467 / LMG 4362 / NCIMB 8255 / S1)).